Here is a 375-residue protein sequence, read N- to C-terminus: Protein GOLM2 (375 aa).

The Cytoplasmic portion of the chain corresponds to 1–12 (MVGFGANRRGGR). A helical; Signal-anchor for type II membrane protein transmembrane segment spans residues 13–33 (LPSFLLAALLLVIAVLAFNCW). Residues 34–198 (NAASRQAVLR…REQKATQRIQ (165 aa)) are a coiled coil. Residues 34–375 (NAASRQAVLR…SKPRFGDGVL (342 aa)) lie on the Lumenal side of the membrane. Disordered stretches follow at residues 81 to 102 (LEQK…DGQV), 193 to 327 (ATQR…DSQN), and 342 to 375 (RAVG…DGVL). Basic and acidic residues-rich tracts occupy residues 193–204 (ATQRIQSSKDAE) and 350–375 (KQND…DGVL).

The protein belongs to the GOLM family.

It is found in the membrane. In Gallus gallus (Chicken), this protein is Protein GOLM2 (GOLM2).